A 365-amino-acid polypeptide reads, in one-letter code: Transcription factor MYB93 (365 aa).

HTH myb-type domains follow at residues 9–61 (ENGL…TNYL) and 62–116 (RPDI…KKKL). 2 consecutive DNA-binding regions (H-T-H motif) follow at residues 37–61 (WRALPKLADLNRCGKSCRLRWTNYL) and 89–112 (WSAIATHLQGRTDNEIKNFWNTHL).

In terms of assembly, interacts with FBX5.

Its subcellular location is the nucleus. It localises to the cytoplasm. In terms of biological role, transcription factor that acts as a negative regulator of lateral root (LR) development. Required for normal auxin responses during LR development. May be part of a negative feedback loop stimulated specifically in the endodermis upon LR initiation to ensure that LRs are formed only in the correct place. In Arabidopsis thaliana (Mouse-ear cress), this protein is Transcription factor MYB93.